Reading from the N-terminus, the 145-residue chain is D-aminoacyl-tRNA deacylase (145 aa).

Residues 137–138 carry the Gly-cisPro motif, important for rejection of L-amino acids motif; that stretch reads GP.

It belongs to the DTD family. Homodimer.

It is found in the cytoplasm. The enzyme catalyses glycyl-tRNA(Ala) + H2O = tRNA(Ala) + glycine + H(+). It catalyses the reaction a D-aminoacyl-tRNA + H2O = a tRNA + a D-alpha-amino acid + H(+). Functionally, an aminoacyl-tRNA editing enzyme that deacylates mischarged D-aminoacyl-tRNAs. Also deacylates mischarged glycyl-tRNA(Ala), protecting cells against glycine mischarging by AlaRS. Acts via tRNA-based rather than protein-based catalysis; rejects L-amino acids rather than detecting D-amino acids in the active site. By recycling D-aminoacyl-tRNA to D-amino acids and free tRNA molecules, this enzyme counteracts the toxicity associated with the formation of D-aminoacyl-tRNA entities in vivo and helps enforce protein L-homochirality. The sequence is that of D-aminoacyl-tRNA deacylase from Lactobacillus delbrueckii subsp. bulgaricus (strain ATCC 11842 / DSM 20081 / BCRC 10696 / JCM 1002 / NBRC 13953 / NCIMB 11778 / NCTC 12712 / WDCM 00102 / Lb 14).